Consider the following 291-residue polypeptide: Ribosomal RNA small subunit methyltransferase A (291 aa).

S-adenosyl-L-methionine-binding residues include H21, L23, G48, E70, D95, and N115.

It belongs to the class I-like SAM-binding methyltransferase superfamily. rRNA adenine N(6)-methyltransferase family. RsmA subfamily.

It is found in the cytoplasm. The catalysed reaction is adenosine(1518)/adenosine(1519) in 16S rRNA + 4 S-adenosyl-L-methionine = N(6)-dimethyladenosine(1518)/N(6)-dimethyladenosine(1519) in 16S rRNA + 4 S-adenosyl-L-homocysteine + 4 H(+). In terms of biological role, specifically dimethylates two adjacent adenosines (A1518 and A1519) in the loop of a conserved hairpin near the 3'-end of 16S rRNA in the 30S particle. May play a critical role in biogenesis of 30S subunits. This chain is Ribosomal RNA small subunit methyltransferase A, found in Prochlorococcus marinus (strain NATL1A).